A 141-amino-acid chain; its full sequence is Large ribosomal subunit protein uL11 (141 aa).

This sequence belongs to the universal ribosomal protein uL11 family. In terms of assembly, part of the ribosomal stalk of the 50S ribosomal subunit. Interacts with L10 and the large rRNA to form the base of the stalk. L10 forms an elongated spine to which L12 dimers bind in a sequential fashion forming a multimeric L10(L12)X complex. One or more lysine residues are methylated.

In terms of biological role, forms part of the ribosomal stalk which helps the ribosome interact with GTP-bound translation factors. This Prochlorococcus marinus (strain MIT 9211) protein is Large ribosomal subunit protein uL11.